Consider the following 225-residue polypeptide: GrpE protein homolog 2, mitochondrial (225 aa).

The N-terminal 32 residues, 1-32 (MAVRSLWACRLRVQRLLAWSAAWESKGWPLPF), are a transit peptide targeting the mitochondrion. N6-acetyllysine is present on Lys-142.

Belongs to the GrpE family. In terms of assembly, probable component of the PAM complex at least composed of a mitochondrial HSP70 protein, GRPEL1 or GRPEL2, TIMM44, TIMM16/PAM16 and TIMM14/DNAJC19.

It localises to the mitochondrion matrix. Essential component of the PAM complex, a complex required for the translocation of transit peptide-containing proteins from the inner membrane into the mitochondrial matrix in an ATP-dependent manner. Seems to control the nucleotide-dependent binding of mitochondrial HSP70 to substrate proteins. Stimulates ATPase activity of mt-HSP70. May also serve to modulate the interconversion of oligomeric (inactive) and monomeric (active) forms of mt-HSP70. The protein is GrpE protein homolog 2, mitochondrial (GRPEL2) of Pongo abelii (Sumatran orangutan).